The primary structure comprises 389 residues: Phospho-N-acetylmuramoyl-pentapeptide-transferase (389 aa).

A run of 10 helical transmembrane segments spans residues 25–45 (RAVMATITALVIGLVCGPWVI), 73–93 (TMGGVLILIGIAVATLLWGDL), 97–117 (FIWIVMLVTFGFGVIGWVDDY), 135–155 (FWQSVIGLFAAVYLAFSVSEA), 190–210 (ISYPLGVWGFIALTYFVIVGA), 222–242 (GLVIMPVVLVGASLGVFAYVM), 258–278 (GAGELLIFCSAMGGAGLAFLW), 286–306 (VFMGDVGALALGGALGTVAVI), 311–331 (IVLFIMGGIFVAETLSVMLQV), and 366–386 (QVVVRFWIITLMLCLFGLSTL).

It belongs to the glycosyltransferase 4 family. MraY subfamily. Mg(2+) serves as cofactor.

It is found in the cell inner membrane. It carries out the reaction UDP-N-acetyl-alpha-D-muramoyl-L-alanyl-gamma-D-glutamyl-meso-2,6-diaminopimeloyl-D-alanyl-D-alanine + di-trans,octa-cis-undecaprenyl phosphate = di-trans,octa-cis-undecaprenyl diphospho-N-acetyl-alpha-D-muramoyl-L-alanyl-D-glutamyl-meso-2,6-diaminopimeloyl-D-alanyl-D-alanine + UMP. Its pathway is cell wall biogenesis; peptidoglycan biosynthesis. Catalyzes the initial step of the lipid cycle reactions in the biosynthesis of the cell wall peptidoglycan: transfers peptidoglycan precursor phospho-MurNAc-pentapeptide from UDP-MurNAc-pentapeptide onto the lipid carrier undecaprenyl phosphate, yielding undecaprenyl-pyrophosphoryl-MurNAc-pentapeptide, known as lipid I. In Burkholderia pseudomallei (strain 1106a), this protein is Phospho-N-acetylmuramoyl-pentapeptide-transferase.